The chain runs to 514 residues: RNA-splicing ligase RtcB homolog (514 aa).

Mn(2+) is bound by residues aspartate 128, cysteine 131, histidine 236, histidine 268, and histidine 362. Residue 235–239 (NHYAE) coordinates GMP. GMP contacts are provided by residues 362–363 (HN), 411–414 (GGTM), serine 418, 437–440 (HGAG), and lysine 513. Histidine 437 acts as the GMP-histidine intermediate in catalysis.

It belongs to the RtcB family. In terms of assembly, catalytic component of the tRNA-splicing ligase complex. Mn(2+) is required as a cofactor.

It catalyses the reaction a 3'-end 3'-phospho-ribonucleotide-RNA + a 5'-end dephospho-ribonucleoside-RNA + GTP = a ribonucleotidyl-ribonucleotide-RNA + GMP + diphosphate. It carries out the reaction a 3'-end 2',3'-cyclophospho-ribonucleotide-RNA + a 5'-end dephospho-ribonucleoside-RNA + GTP + H2O = a ribonucleotidyl-ribonucleotide-RNA + GMP + diphosphate + H(+). Its function is as follows. Catalytic subunit of the tRNA-splicing ligase complex that acts by directly joining spliced tRNA halves to mature-sized tRNAs by incorporating the precursor-derived splice junction phosphate into the mature tRNA as a canonical 3',5'-phosphodiester. May act as an RNA ligase with broad substrate specificity, and may function toward other RNAs. This is RNA-splicing ligase RtcB homolog from Ostreococcus lucimarinus (strain CCE9901).